Reading from the N-terminus, the 318-residue chain is DNA primase small subunit PriS (318 aa).

Active-site residues include Asp-95, Asp-97, and Asp-224.

This sequence belongs to the eukaryotic-type primase small subunit family. As to quaternary structure, heterodimer of a small subunit (PriS) and a large subunit (PriL). Mg(2+) serves as cofactor. Requires Mn(2+) as cofactor.

Catalytic subunit of DNA primase, an RNA polymerase that catalyzes the synthesis of short RNA molecules used as primers for DNA polymerase during DNA replication. The small subunit contains the primase catalytic core and has DNA synthesis activity on its own. Binding to the large subunit stabilizes and modulates the activity, increasing the rate of DNA synthesis while decreasing the length of the DNA fragments, and conferring RNA synthesis capability. The DNA polymerase activity may enable DNA primase to also catalyze primer extension after primer synthesis. May also play a role in DNA repair. This chain is DNA primase small subunit PriS, found in Sulfurisphaera tokodaii (strain DSM 16993 / JCM 10545 / NBRC 100140 / 7) (Sulfolobus tokodaii).